We begin with the raw amino-acid sequence, 177 residues long: Nucleoside triphosphate/diphosphate phosphatase (177 aa).

The active-site Proton donor is the arginine 23. Asparagine 87, aspartate 103, aspartate 105, aspartate 107, aspartate 120, and glutamate 123 together coordinate Mg(2+).

The protein belongs to the Ntdp family. It depends on Mg(2+) as a cofactor.

It carries out the reaction a ribonucleoside 5'-triphosphate + H2O = a ribonucleoside 5'-diphosphate + phosphate + H(+). The catalysed reaction is a ribonucleoside 5'-diphosphate + H2O = a ribonucleoside 5'-phosphate + phosphate + H(+). Has nucleoside phosphatase activity towards nucleoside triphosphates and nucleoside diphosphates. The chain is Nucleoside triphosphate/diphosphate phosphatase from Streptococcus pneumoniae serotype 2 (strain D39 / NCTC 7466).